A 303-amino-acid chain; its full sequence is Protein-lysine N-methyltransferase rrg1 (303 aa).

S-adenosyl-L-methionine is bound by residues tryptophan 117, 143 to 145, aspartate 165, tryptophan 198, and serine 221; that span reads GAG.

Belongs to the class I-like SAM-binding methyltransferase superfamily. METTL21 family.

Its subcellular location is the cytoplasm. The protein localises to the nucleus. S-adenosyl-L-methionine-dependent protein-lysine N-methyltransferase that methylates elongation factor 2 and elongation factor 3A. This Schizosaccharomyces pombe (strain 972 / ATCC 24843) (Fission yeast) protein is Protein-lysine N-methyltransferase rrg1.